A 344-amino-acid chain; its full sequence is Meiotic recombination protein DMC1 homolog (344 aa).

A disordered region spans residues 1-22; it reads MMASLKAEETSQMQLVEREEND. Residue 133-140 coordinates ATP; that stretch reads GEFRSGKT. Residue arginine 235 coordinates dsDNA. SsDNA-binding residues include arginine 235, phenylalanine 238, arginine 241, arginine 247, and arginine 315. Arginine 241 and arginine 247 together coordinate dsDNA.

Belongs to the RecA family. DMC1 subfamily. As to quaternary structure, double stacked ring-shaped homooctamer. Interacts with BRCA2A and BRCA2B. In terms of tissue distribution, expressed in mitotic and/or meiotic tissues. Expressed in roots, leaves and anthers and carpels of young fower buds.

The protein localises to the nucleus. Its function is as follows. May participate in meiotic recombination, specifically in homologous strand assimilation, which is required for the resolution of meiotic double-strand breaks. Mediates interhomolog recombination during meiosis. This Arabidopsis thaliana (Mouse-ear cress) protein is Meiotic recombination protein DMC1 homolog.